The primary structure comprises 440 residues: Nuclear fusion protein BIK1 (440 aa).

The 44-residue stretch at 26–69 folds into the CAP-Gly domain; it reads GPVDTKAGMFAGVDLLANIGKNDGSFMGKKYFQTEYPQSGLFIQ. Ser95 and Ser110 each carry phosphoserine. The segment at 108–157 is disordered; sequence QFSPMDDPKSPTPMRSFRITSRHSGNQQSMDQEASDHHQQQEFGYDNRED. Residues 125 to 139 show a composition bias toward polar residues; the sequence is RITSRHSGNQQSMDQ. Residues 141-157 show a composition bias toward basic and acidic residues; sequence ASDHHQQQEFGYDNRED. Residues 190-397 adopt a coiled-coil conformation; the sequence is NSSEVTIELR…AQAQTAVESL (208 aa). The CCHC-box motif lies at 416 to 429; that stretch reads CEHCDTMGHNTAEC.

It localises to the cytoplasm. The protein resides in the cytoskeleton. The protein localises to the microtubule organizing center. It is found in the spindle pole body. Its subcellular location is the spindle. Its function is as follows. Required for nuclear fusion, chromosome disjunction, and nuclear segregation during mitosis. Probably required for the formation or stabilization of microtubules during mitosis and for spindle pole body fusion during conjugation. In Saccharomyces cerevisiae (strain ATCC 204508 / S288c) (Baker's yeast), this protein is Nuclear fusion protein BIK1 (BIK1).